Here is a 666-residue protein sequence, read N- to C-terminus: Mitogen-activated protein kinase kinase kinase ANP1 (666 aa).

Residues 69–331 (WRKGQLIGRG…ASELLKHPFV (263 aa)) form the Protein kinase domain. ATP contacts are provided by residues 75-83 (IGRGAFGTV) and Lys-98. Residues 101-131 (LIAANFASKEKTQAHIQELEEEVKLLKNLSH) adopt a coiled-coil conformation. Glycyl lysine isopeptide (Lys-Gly) (interchain with G-Cter in ubiquitin) cross-links involve residues Lys-109 and Lys-111. Asp-197 (proton acceptor) is an active-site residue. Residues 452–464 (KFDESPGNGEKES) are compositionally biased toward basic and acidic residues. Disordered regions lie at residues 452–481 (KFDE…DDDE), 536–592 (GFLK…DGVS), and 635–666 (QEIM…SPGK). Residues 538–558 (LKLPPKSRSPSRGPLGGSPSR) show a composition bias toward low complexity. The segment covering 560-569 (TDATSCSKSP) has biased composition (polar residues). The stretch at 620 to 643 (KKWKEELDQELERKRQEIMRQAGL) forms a coiled coil. Positions 647 to 660 (PRDRGMSRQREKSR) are enriched in basic and acidic residues.

This sequence belongs to the protein kinase superfamily. STE Ser/Thr protein kinase family. MAP kinase kinase kinase subfamily. As to expression, expressed in roots, inflorescence stems, flower buds and flowers. Low amount in rosette and cauline leaves.

The enzyme catalyses L-seryl-[protein] + ATP = O-phospho-L-seryl-[protein] + ADP + H(+). It carries out the reaction L-threonyl-[protein] + ATP = O-phospho-L-threonyl-[protein] + ADP + H(+). May be involved in an oxidative stress-mediated signaling cascade that phosphorylates downstream MAP kinases MPK3 and MPK6. May suppress auxin signaling that promotes cell cycle. Functionally redundant to ANP2 and ANP3 in the positive regulation of cytokinesis. The sequence is that of Mitogen-activated protein kinase kinase kinase ANP1 (ANP1) from Arabidopsis thaliana (Mouse-ear cress).